We begin with the raw amino-acid sequence, 868 residues long: Probable beta-glucosidase F (868 aa).

The first 20 residues, 1-20, serve as a signal peptide directing secretion; the sequence is MAHRWLILALVAAAAPRALA. Residues 21–40 are disordered; the sequence is SPGPSLNERQSDDEPFSPPY. Residues N65, N73, and N257 are each glycosylated (N-linked (GlcNAc...) asparagine). D285 is an active-site residue. N-linked (GlcNAc...) asparagine glycosylation is found at N328, N360, N395, N421, and N726. Residues 731-752 are disordered; the sequence is YPYPDGYSTDPQPPPRAGGAEG.

It belongs to the glycosyl hydrolase 3 family.

It is found in the secreted. The catalysed reaction is Hydrolysis of terminal, non-reducing beta-D-glucosyl residues with release of beta-D-glucose.. It functions in the pathway glycan metabolism; cellulose degradation. In terms of biological role, beta-glucosidases are one of a number of cellulolytic enzymes involved in the degradation of cellulosic biomass. Catalyzes the last step releasing glucose from the inhibitory cellobiose. This is Probable beta-glucosidase F (bglF) from Emericella nidulans (strain FGSC A4 / ATCC 38163 / CBS 112.46 / NRRL 194 / M139) (Aspergillus nidulans).